A 354-amino-acid chain; its full sequence is DNA polymerase IV (354 aa).

Residues 7 to 188 (IIHVDMDCFF…LPLAKIPGVG (182 aa)) enclose the UmuC domain. Residues Asp11 and Asp106 each coordinate Mg(2+). Glu107 is a catalytic residue.

It belongs to the DNA polymerase type-Y family. Monomer. Mg(2+) serves as cofactor.

Its subcellular location is the cytoplasm. The enzyme catalyses DNA(n) + a 2'-deoxyribonucleoside 5'-triphosphate = DNA(n+1) + diphosphate. Its function is as follows. Poorly processive, error-prone DNA polymerase involved in untargeted mutagenesis. Copies undamaged DNA at stalled replication forks, which arise in vivo from mismatched or misaligned primer ends. These misaligned primers can be extended by PolIV. Exhibits no 3'-5' exonuclease (proofreading) activity. May be involved in translesional synthesis, in conjunction with the beta clamp from PolIII. The sequence is that of DNA polymerase IV from Shigella boydii serotype 18 (strain CDC 3083-94 / BS512).